A 786-amino-acid chain; its full sequence is Protein translocase subunit SecA 1 (786 aa).

ATP-binding positions include glutamine 85, 103–107, and aspartate 491; that span reads GEGKT.

The protein belongs to the SecA family. Monomer and homodimer. Part of the essential Sec protein translocation apparatus which comprises SecA, SecYEG and auxiliary proteins SecDF. Other proteins may also be involved.

It is found in the cell membrane. The protein resides in the cytoplasm. It carries out the reaction ATP + H2O + cellular proteinSide 1 = ADP + phosphate + cellular proteinSide 2.. Its function is as follows. Part of the Sec protein translocase complex. Interacts with the SecYEG preprotein conducting channel. Has a central role in coupling the hydrolysis of ATP to the transfer of proteins into and across the cell membrane, serving as an ATP-driven molecular motor driving the stepwise translocation of polypeptide chains across the membrane. This chain is Protein translocase subunit SecA 1, found in Pediococcus pentosaceus (strain ATCC 25745 / CCUG 21536 / LMG 10740 / 183-1w).